The sequence spans 275 residues: Large ribosomal subunit protein uL2 (275 aa).

The disordered stretch occupies residues 221 to 275 (RGTAMNPIDHPHGGGEGKNFGKHPVSPWGVQSKGKKTRKNKRTEKYILYNRKYKK). Over residues 253-262 (KGKKTRKNKR) the composition is skewed to basic residues.

The protein belongs to the universal ribosomal protein uL2 family. Part of the 50S ribosomal subunit. Forms a bridge to the 30S subunit in the 70S ribosome.

Functionally, one of the primary rRNA binding proteins. Required for association of the 30S and 50S subunits to form the 70S ribosome, for tRNA binding and peptide bond formation. It has been suggested to have peptidyltransferase activity; this is somewhat controversial. Makes several contacts with the 16S rRNA in the 70S ribosome. The polypeptide is Large ribosomal subunit protein uL2 (Wigglesworthia glossinidia brevipalpis).